The following is a 533-amino-acid chain: CTP synthase (533 aa).

The segment at 1–264 is amidoligase domain; that stretch reads MKYIFVTGGV…GKLVTEKLNL (264 aa). S12 is a binding site for CTP. S12 provides a ligand contact to UTP. Residues 13–18 and D70 contribute to the ATP site; that span reads SLGKGI. 2 residues coordinate Mg(2+): D70 and E138. Residues 145 to 147, 185 to 190, and K221 contribute to the CTP site; these read DIE and KTKPTQ. Residues 185–190 and K221 contribute to the UTP site; that span reads KTKPTQ. An ATP-binding site is contributed by 237-239; that stretch reads KDA. Positions 289 to 533 constitute a Glutamine amidotransferase type-1 domain; that stretch reads TIGIVGKYIE…HGLVKASIEK (245 aa). G357 contributes to the L-glutamine binding site. C384 functions as the Nucleophile; for glutamine hydrolysis in the catalytic mechanism. L-glutamine-binding positions include 385-388, E407, and R464; that span reads LGMQ. Active-site residues include H509 and E511.

The protein belongs to the CTP synthase family. Homotetramer.

It carries out the reaction UTP + L-glutamine + ATP + H2O = CTP + L-glutamate + ADP + phosphate + 2 H(+). It catalyses the reaction L-glutamine + H2O = L-glutamate + NH4(+). The catalysed reaction is UTP + NH4(+) + ATP = CTP + ADP + phosphate + 2 H(+). It participates in pyrimidine metabolism; CTP biosynthesis via de novo pathway; CTP from UDP: step 2/2. Its activity is regulated as follows. Allosterically activated by GTP, when glutamine is the substrate; GTP has no effect on the reaction when ammonia is the substrate. The allosteric effector GTP functions by stabilizing the protein conformation that binds the tetrahedral intermediate(s) formed during glutamine hydrolysis. Inhibited by the product CTP, via allosteric rather than competitive inhibition. Functionally, catalyzes the ATP-dependent amination of UTP to CTP with either L-glutamine or ammonia as the source of nitrogen. Regulates intracellular CTP levels through interactions with the four ribonucleotide triphosphates. The protein is CTP synthase of Methanococcus maripaludis (strain DSM 14266 / JCM 13030 / NBRC 101832 / S2 / LL).